A 286-amino-acid chain; its full sequence is MTVIDEIYSSSSAIPTVALNDEAKKPVLGLGVAKLSDEETESSVLAALEAGCRLIDTAASYGNEAAVGRAIAASGIPREELFVTTKLGTSRQGFHSAQESCKESLDRLGLDYLDLYLIHWPAPTLGKYVESFEGMIEARERGHVRSIGVSNFTEDLLATVIEETNEVPAVNQVELHPRLNQAELRQVHAQHDVTTQSYSPLGVGRLIEEPTVTTIAAEYGRTPAQVLVRWNLQLDNVVVSRSSKPERVAENLDVFDFTLEPEHMEAIEGLHDGTRVLHDPMTFMGT.

The Proton donor role is filled by Tyr61. Residues Leu201, Val203, Val239, Arg241, Ser242, Arg247, and Asn251 each coordinate NADPH.

Belongs to the aldo/keto reductase family.

The protein is Aldo-keto reductase MAP_4149 of Mycolicibacterium paratuberculosis (strain ATCC BAA-968 / K-10) (Mycobacterium paratuberculosis).